A 229-amino-acid polypeptide reads, in one-letter code: MENQPKLNSSKEVIAFLAERFPHCFSAEGEARPLKIGIFQDLVDRVAGEMNLSKTQLRSALRLYTSSWRYLYGVKPGAIRVDLDGNPCGELEEQHVEHARKQLEEAKARVQAQRAEQQAKKREAAAAAGDKESAPRRERKPRPAAPRRKEGAERKPRAEKPAAKAPRAPREEKHTPVSDISALTVGQALKVKAGNDAMDATVLEITKDGVRVQLNSGMSLIVRAEHLVF.

Residues 105–178 (EAKARVQAQR…PREEKHTPVS (74 aa)) are disordered. Positions 117 to 136 (QQAKKREAAAAAGDKESAPR) are enriched in basic and acidic residues. Positions 137–146 (RERKPRPAAP) are enriched in basic residues. A compositionally biased stretch (basic and acidic residues) spans 147-176 (RRKEGAERKPRAEKPAAKAPRAPREEKHTP).

It belongs to the ProQ family.

It localises to the cytoplasm. In terms of biological role, RNA chaperone with significant RNA binding, RNA strand exchange and RNA duplexing activities. May regulate ProP activity through an RNA-based, post-transcriptional mechanism. The chain is RNA chaperone ProQ from Escherichia fergusonii (strain ATCC 35469 / DSM 13698 / CCUG 18766 / IAM 14443 / JCM 21226 / LMG 7866 / NBRC 102419 / NCTC 12128 / CDC 0568-73).